We begin with the raw amino-acid sequence, 967 residues long: Leucine--tRNA ligase (967 aa).

Positions 43 to 53 (PYLSGHLHVGH) match the 'HIGH' region motif. The 'KMSKS' region motif lies at 650 to 654 (KMSKS). Lysine 653 contacts ATP.

It belongs to the class-I aminoacyl-tRNA synthetase family.

Its subcellular location is the cytoplasm. The catalysed reaction is tRNA(Leu) + L-leucine + ATP = L-leucyl-tRNA(Leu) + AMP + diphosphate. This is Leucine--tRNA ligase from Thermococcus onnurineus (strain NA1).